A 301-amino-acid polypeptide reads, in one-letter code: UDP-N-acetylenolpyruvoylglucosamine reductase (301 aa).

One can recognise an FAD-binding PCMH-type domain in the interval 27–194; sequence RVGGPADVVF…LDAIFEGTPD (168 aa). Arg172 is a catalytic residue. Ser223 acts as the Proton donor in catalysis. Residue Glu293 is part of the active site.

This sequence belongs to the MurB family. FAD is required as a cofactor.

It is found in the cytoplasm. The catalysed reaction is UDP-N-acetyl-alpha-D-muramate + NADP(+) = UDP-N-acetyl-3-O-(1-carboxyvinyl)-alpha-D-glucosamine + NADPH + H(+). It participates in cell wall biogenesis; peptidoglycan biosynthesis. Functionally, cell wall formation. This chain is UDP-N-acetylenolpyruvoylglucosamine reductase, found in Caulobacter vibrioides (strain NA1000 / CB15N) (Caulobacter crescentus).